We begin with the raw amino-acid sequence, 228 residues long: Growth arrest-specific protein 1 homolog (228 aa).

Residues M1–A17 form the signal peptide. 2 N-linked (GlcNAc...) asparagine glycosylation sites follow: N143 and N156. A lipid anchor (GPI-anchor amidated aspartate) is attached at D205. Residues S206–F228 constitute a propeptide, removed in mature form.

As to expression, pharynx muscle cells from its early formation, in the two-fold embryo, until the adult stage.

The protein localises to the cell membrane. Functionally, role in pharynx function or development. In Caenorhabditis elegans, this protein is Growth arrest-specific protein 1 homolog (phg-1).